A 461-amino-acid polypeptide reads, in one-letter code: GTPase Era, mitochondrial (461 aa).

The N-terminal 35 residues, 1–35 (MAAPWLQRWRGAYAGPSGPLRLVRLHGVQRSSWRA), are a transit peptide targeting the mitochondrion. The segment at 39 to 73 (AAGAFGAGPHPGPPQRAANPGPGPHPPPVATSREK) is disordered. In terms of domain architecture, Era-type G spans 89 to 354 (KVLRISIIGA…QYLLMQAKPG (266 aa)). A G1 region spans residues 97–104 (GAPNSGKS). Position 97-104 (97-104 (GAPNSGKS)) interacts with GTP. Positions 123 to 127 (HTTRC) are G2. The tract at residues 144–147 (DTPG) is G3. GTP is bound by residues 144–148 (DTPGL) and 213–216 (NKVD). A G4 region spans residues 213–216 (NKVD). The interval 260–319 (KVTQTPPPENRARESPCQLETDKAQEGSSLDNSSDVKASESSLDTEAREQKPYKYGDQKN) is disordered. Positions 269 to 284 (NRARESPCQLETDKAQ) are enriched in basic and acidic residues. Over residues 285 to 303 (EGSSLDNSSDVKASESSLD) the composition is skewed to polar residues. The span at 304–319 (TEAREQKPYKYGDQKN) shows a compositional bias: basic and acidic residues. A G5 region spans residues 332–334 (LAA). One can recognise a KH type-2 domain in the interval 380-461 (ILEYLPLEVP…RLKLKVEVKS (82 aa)).

The protein belongs to the TRAFAC class TrmE-Era-EngA-EngB-Septin-like GTPase superfamily. Era GTPase family.

It is found in the mitochondrion matrix. Its subcellular location is the mitochondrion inner membrane. Functionally, probable GTPase that plays a role in the mitochondrial ribosomal small subunit assembly. Specifically binds the 12S mitochondrial rRNA (12S mt-rRNA) to a 33 nucleotide section delineating the 3' terminal stem-loop region. May act as a chaperone that protects the 12S mt-rRNA on the 28S mitoribosomal subunit during ribosomal small subunit assembly. This is GTPase Era, mitochondrial (ERAL1) from Gallus gallus (Chicken).